A 300-amino-acid polypeptide reads, in one-letter code: N-acetylmannosamine kinase (300 aa).

ATP is bound by residues 5 to 12 and 132 to 139; these read ALDIGGTK and GVGGGIVL. Zn(2+) is bound by residues H156, C166, C168, and C173.

It belongs to the ROK (NagC/XylR) family. NanK subfamily. As to quaternary structure, homodimer.

The enzyme catalyses an N-acyl-D-mannosamine + ATP = an N-acyl-D-mannosamine 6-phosphate + ADP + H(+). Its pathway is amino-sugar metabolism; N-acetylneuraminate degradation; D-fructose 6-phosphate from N-acetylneuraminate: step 2/5. Catalyzes the phosphorylation of N-acetylmannosamine (ManNAc) to ManNAc-6-P. This is N-acetylmannosamine kinase from Haemophilus influenzae (strain PittGG).